Consider the following 190-residue polypeptide: Imidazoleglycerol-phosphate dehydratase (190 aa).

Belongs to the imidazoleglycerol-phosphate dehydratase family.

The protein localises to the cytoplasm. It catalyses the reaction D-erythro-1-(imidazol-4-yl)glycerol 3-phosphate = 3-(imidazol-4-yl)-2-oxopropyl phosphate + H2O. The protein operates within amino-acid biosynthesis; L-histidine biosynthesis; L-histidine from 5-phospho-alpha-D-ribose 1-diphosphate: step 6/9. This Wolinella succinogenes (strain ATCC 29543 / DSM 1740 / CCUG 13145 / JCM 31913 / LMG 7466 / NCTC 11488 / FDC 602W) (Vibrio succinogenes) protein is Imidazoleglycerol-phosphate dehydratase.